Here is a 26-residue protein sequence, read N- to C-terminus: Oxyopinin-3a (26 aa).

Expressed by the venom gland.

It is found in the secreted. In terms of biological role, may have cytolytic and antimicrobial activity. In Oxyopes takobius (Lynx spider), this protein is Oxyopinin-3a.